The sequence spans 434 residues: Protein maelstrom homolog (434 aa).

Residues 4–73 constitute a DNA-binding region (HMG box); that stretch reads RKASRNAYYF…AQGKDSGPSE (70 aa). 2 disordered regions span residues 62-94 and 357-385; these read RAAQGKDSGPSEKQKPVFTPLRKPGMLVPKQNV and SHFNSANQEQRSNTPIGDYPSRAKISGQN. Over residues 357 to 371 the composition is skewed to polar residues; that stretch reads SHFNSANQEQRSNTP.

The protein belongs to the maelstrom family. In terms of assembly, interacts with SMARCB1, SIN3B and DDX4. Interacts with piRNA-associated proteins TDRD1, PIWIL1 and PIWIL2. Interacts with TEX19.

It is found in the cytoplasm. The protein resides in the nucleus. Its function is as follows. Plays a central role during spermatogenesis by repressing transposable elements and preventing their mobilization, which is essential for the germline integrity. Acts via the piRNA metabolic process, which mediates the repression of transposable elements during meiosis by forming complexes composed of piRNAs and Piwi proteins and governs the methylation and subsequent repression of transposons. Its association with piP-bodies suggests a participation in the secondary piRNAs metabolic process. Required for the localization of germ-cell factors to the meiotic nuage. This is Protein maelstrom homolog (MAEL) from Macaca fascicularis (Crab-eating macaque).